We begin with the raw amino-acid sequence, 427 residues long: Ribitol transporter (427 aa).

Residues 1–7 (MSVNNKQ) are Cytoplasmic-facing. A helical membrane pass occupies residues 8–28 (WYGLPLNLIWGYVAIAVFMTG). Residues 29–51 (DGFELAFLSHYIKALGFTPAQAS) lie on the Extracellular side of the membrane. Residues 52–72 (FAFTLYGLAAALSAWVSGVVA) form a helical membrane-spanning segment. At 73 to 79 (EIITPRK) the chain is on the cytoplasmic side. A helical transmembrane segment spans residues 80 to 100 (AMLIGFVLWCVFHVLFLVFGL). Topologically, residues 101 to 107 (GRANYAL) are extracellular. The helical transmembrane segment at 108-128 (ILLFYGIRGLAYPLFLYSFIV) threads the bilayer. Residues 129-141 (AIIHNVRSDSSSS) lie on the Cytoplasmic side of the membrane. A helical membrane pass occupies residues 142-162 (ALGWFWAVYSVGIGVFGSYIP). Residues 163–171 (SFTIPHIGE) lie on the Extracellular side of the membrane. Residues 172 to 192 (MGTLWLALLFCATGGIIALVS) traverse the membrane as a helical segment. Residues 193–238 (MRHTETPRHMQNLTTREKFAELGRAATLLYTNRSILFSSIVRIINT) lie on the Cytoplasmic side of the membrane. The chain crosses the membrane as a helical span at residues 239-259 (LSLFGFAVIMPMMFVDELGFT). Topologically, residues 260–263 (TSEW) are extracellular. A helical membrane pass occupies residues 264-284 (LQVWAAFFFTTIFSNVFWGIV). Over 285–295 (AEKMGWMKVIR) the chain is Cytoplasmic. Residues 296–316 (WFGCIGMALSSLAFYYLPQHF) form a helical membrane-spanning segment. At 317 to 323 (GHNFAMA) the chain is on the extracellular side. A helical membrane pass occupies residues 324–344 (LVPAIALGIFVAAFVPMAAVF). The Cytoplasmic segment spans residues 345 to 360 (PALEPNHKGAAISVYN). The helical transmembrane segment at 361–381 (LSAGLSNFLAPAIAVVLLPYF) threads the bilayer. Over 382–383 (ST) the chain is Extracellular. The chain crosses the membrane as a helical span at residues 384–404 (IGVVIAYTALYILAFFLCPLI). At 405–427 (RVEQPGFTSDQHAKPFTANAAES) the chain is on the cytoplasmic side.

The protein belongs to the major facilitator superfamily. Sugar transporter (TC 2.A.1.1) family. CsbX subfamily.

The protein localises to the cell membrane. The polypeptide is Ribitol transporter (rbtT) (Klebsiella pneumoniae).